The chain runs to 73 residues: Gas vesicle protein M2 (73 aa).

This sequence belongs to the gas vesicle GvpA family. In terms of assembly, gvpF to GvpM interact with each other in vitro, and may form multi-subunit complex(es). Might interact with GvpA.

Its subcellular location is the gas vesicle. Proteins GvpF to GvpM might be involved in nucleating gas vesicle formation. A minor component of the gas vesicle. Gas vesicles are hollow, gas filled proteinaceous nanostructures found in several microbial planktonic microorganisms. They allow positioning of halobacteria at the optimal depth for growth in the poorly aerated, shallow brine pools of their habitat. Its function is as follows. Expression of 2 c-vac DNA fragments containing 2 divergently transcribed regions (gvpE-gvpF-gvpG-gvpH-gvpI-gvpJ-gvpK-gvpL-gvpM and gvpA-gvpC-gvpN-gvpO) allows H.volcanii to produce gas vesicles. The polypeptide is Gas vesicle protein M2 (Halobacterium salinarum (strain ATCC 700922 / JCM 11081 / NRC-1) (Halobacterium halobium)).